We begin with the raw amino-acid sequence, 119 residues long: Ribosome-binding factor A (119 aa).

It belongs to the RbfA family. Monomer. Binds 30S ribosomal subunits, but not 50S ribosomal subunits or 70S ribosomes.

It is found in the cytoplasm. Functionally, one of several proteins that assist in the late maturation steps of the functional core of the 30S ribosomal subunit. Associates with free 30S ribosomal subunits (but not with 30S subunits that are part of 70S ribosomes or polysomes). Required for efficient processing of 16S rRNA. May interact with the 5'-terminal helix region of 16S rRNA. The protein is Ribosome-binding factor A of Coxiella burnetii (strain CbuG_Q212) (Coxiella burnetii (strain Q212)).